A 243-amino-acid polypeptide reads, in one-letter code: Ubiquinone biosynthesis O-methyltransferase (243 aa).

Positions 44, 64, 85, and 129 each coordinate S-adenosyl-L-methionine.

This sequence belongs to the methyltransferase superfamily. UbiG/COQ3 family.

It carries out the reaction a 3-demethylubiquinol + S-adenosyl-L-methionine = a ubiquinol + S-adenosyl-L-homocysteine + H(+). It catalyses the reaction a 3-(all-trans-polyprenyl)benzene-1,2-diol + S-adenosyl-L-methionine = a 2-methoxy-6-(all-trans-polyprenyl)phenol + S-adenosyl-L-homocysteine + H(+). It participates in cofactor biosynthesis; ubiquinone biosynthesis. Functionally, O-methyltransferase that catalyzes the 2 O-methylation steps in the ubiquinone biosynthetic pathway. This is Ubiquinone biosynthesis O-methyltransferase from Cronobacter sakazakii (strain ATCC BAA-894) (Enterobacter sakazakii).